Consider the following 735-residue polypeptide: MFDQLEFYPAVNYEDNETQNDIKLPEVAKLENIETVHSISKERRDSLTEILNDSSSLPARPFSLPNPNNSTVEKQSLFPFEEKMNPIWIISRPTFSIEQDAEKKINELQTFTNIIDQILGQTNNIESTLLSMKEKFESSEKKLSEFSEMCENLSTDEMRFSEIADGIRKGLTIFAPLKELTRVFRHPPPDFAGKVSFKEHITQLNTCIMFLEENLDFQESPHYLGQYKKLLSQAMDIFKPYFIRIIKQTTDQVLKDSKKMDVHKQLHSSLFYARFSAVGHNLCPTITELCKLCSKESLDAFLPAFYDVYFQCRTRLLKPVLDYHLKSFFMEKSISSYIQKSLALLQLTFFDENKLFREILIMDDFRFMHYWNNLCQSFFENSRSLILHEKNLTELCEVCSYIQSFQNAILEGEREDVDKKVVEFLNPLVLELQERLLFVVQTAIETDIQRYSPTEEDLNPIADDKSLLFDLEKLRLNNDEEKLDPDVPQKLAMAQGWYPVVQKSLIILSKIYRLVNSQVFDEIALELVHSCIRSLVDAYRYFSRNNDKQLARLFLIKNFLVLKDQLNSFDIHYACIEAGVDLRKVWDSVREWRSNLRGVLQLVYETFPKFITNAVDTRQELNQQLRVAVNGYIETAVIHYTECLSIGNLESITEFQNRIQKFPELRQQISLYLSETWIIELFLQAIREEVVSKFQNFYESIVANEDITGSDHNKSGTTSLKHLNEYVEDIYSVMS.

It belongs to the COG3 family. Component of the conserved oligomeric Golgi (COG or Sec34/Sec35) complex which consists of eight different proteins cog1-cog8.

It is found in the golgi apparatus membrane. Its function is as follows. Acts as a component of the peripheral membrane COG complex that is involved in intra-Golgi protein trafficking. COG is located at the cis- Golgi, and regulates tethering of retrograde intra-Golgi vesicles and possibly a number of other membrane trafficking events. This Schizosaccharomyces pombe (strain 972 / ATCC 24843) (Fission yeast) protein is Conserved oligomeric Golgi complex subunit 3 (cog3).